The sequence spans 212 residues: Protein Thf1 (212 aa).

The stretch at 179-201 (ERMEQAVELMQETLAADRRKKEK) forms a coiled coil.

The protein belongs to the THF1 family.

Functionally, may be involved in photosynthetic membrane biogenesis. The sequence is that of Protein Thf1 from Parasynechococcus marenigrum (strain WH8102).